A 105-amino-acid polypeptide reads, in one-letter code: NADH-quinone oxidoreductase subunit K (105 aa).

Transmembrane regions (helical) follow at residues 9–29 (PNYY…GVLV), 34–54 (IVLF…LVTF), and 65–85 (IMAF…LAII).

The protein belongs to the complex I subunit 4L family. As to quaternary structure, NDH-1 is composed of 14 different subunits. Subunits NuoA, H, J, K, L, M, N constitute the membrane sector of the complex.

Its subcellular location is the cell membrane. The enzyme catalyses a quinone + NADH + 5 H(+)(in) = a quinol + NAD(+) + 4 H(+)(out). In terms of biological role, NDH-1 shuttles electrons from NADH, via FMN and iron-sulfur (Fe-S) centers, to quinones in the respiratory chain. The immediate electron acceptor for the enzyme in this species is believed to be a menaquinone. Couples the redox reaction to proton translocation (for every two electrons transferred, four hydrogen ions are translocated across the cytoplasmic membrane), and thus conserves the redox energy in a proton gradient. The protein is NADH-quinone oxidoreductase subunit K of Salinispora tropica (strain ATCC BAA-916 / DSM 44818 / JCM 13857 / NBRC 105044 / CNB-440).